Here is a 307-residue protein sequence, read N- to C-terminus: Acyl transferase (307 aa).

Residues Ser116, Asp213, and His243 each act as charge relay system in the active site.

Belongs to the LuxD family.

The protein operates within lipid metabolism; fatty acid reduction for biolumincescence. Acyl transferase is part of the fatty acid reductase system required for aldehyde biosynthesis; it produces fatty acids for the luminescent reaction. The polypeptide is Acyl transferase (Aliivibrio fischeri (strain MJ11) (Vibrio fischeri)).